The chain runs to 90 residues: UPF0367 protein Ava_2513 (90 aa).

This sequence belongs to the UPF0367 family.

The polypeptide is UPF0367 protein Ava_2513 (Trichormus variabilis (strain ATCC 29413 / PCC 7937) (Anabaena variabilis)).